The primary structure comprises 58 residues: UPF0391 membrane protein Sfri_4000 (58 aa).

Helical transmembrane passes span 6–26 (LMFL…IAGA) and 27–47 (AAGI…ISLV).

This sequence belongs to the UPF0391 family.

It is found in the cell membrane. The polypeptide is UPF0391 membrane protein Sfri_4000 (Shewanella frigidimarina (strain NCIMB 400)).